The following is a 27-amino-acid chain: Caerulein precursor fragment R8 (27 aa).

As to expression, expressed by the skin glands.

The protein resides in the secreted. Functionally, antimicrobial peptide. The protein is Caerulein precursor fragment R8 of Xenopus ruwenzoriensis (Uganda clawed frog).